The following is a 128-amino-acid chain: Large ribosomal subunit protein eL22 (128 aa).

Position 62 is a phosphothreonine (Thr-62). Ser-66 carries the post-translational modification Phosphoserine. Lys-69 carries the post-translational modification N6-succinyllysine.

The protein belongs to the eukaryotic ribosomal protein eL22 family. In terms of assembly, component of the large ribosomal subunit.

It is found in the cytoplasm. Component of the large ribosomal subunit. The ribosome is a large ribonucleoprotein complex responsible for the synthesis of proteins in the cell. This chain is Large ribosomal subunit protein eL22 (RPL22), found in Oryctolagus cuniculus (Rabbit).